The sequence spans 188 residues: dCTP deaminase (188 aa).

DCTP is bound by residues 111 to 116, 135 to 137, Q156, Y170, and Q180; these read KSTYAR and TLE. The active-site Proton donor/acceptor is E137.

It belongs to the dCTP deaminase family. In terms of assembly, homotrimer.

The enzyme catalyses dCTP + H2O + H(+) = dUTP + NH4(+). The protein operates within pyrimidine metabolism; dUMP biosynthesis; dUMP from dCTP (dUTP route): step 1/2. Catalyzes the deamination of dCTP to dUTP. The chain is dCTP deaminase from Pseudomonas putida (strain GB-1).